We begin with the raw amino-acid sequence, 85 residues long: Protein AC4 (85 aa).

G2 carries N-myristoyl glycine; by host lipidation.

Belongs to the geminiviridae protein AC4/C4 family. As to quaternary structure, interacts with Arabidopsis thaliana ASK7/ASK-eta and ASK6/ASK-zeta proteins. In terms of processing, phosphorylated by Arabidopsis thaliana ASK7/ASK-eta mainly on threonine and serine residues.

The protein resides in the host cell membrane. Pathogenicity determinant. May act as a suppressor of RNA-mediated gene silencing, also known as post-transcriptional gene silencing (PTGS), a mechanism of plant viral defense that limits the accumulation of viral RNAs. May repress the AL61 promoter. The chain is Protein AC4 from Solanum lycopersicum (Tomato).